We begin with the raw amino-acid sequence, 267 residues long: Staphylococcal secretory antigen ssaA2 (267 aa).

The first 27 residues, 1 to 27 (MKKIATATIATAGFATIAIASGNQAHA), serve as a signal peptide directing secretion. Tandem repeats lie at residues 83–85 (YNN), 86–88 (YNN), 89–91 (YNN), 95–97 (YNN), 101–103 (YNN), 104–106 (YSN), and 113–115 (YNN). Positions 83-115 (YNNYNNYNNGYSYNNYSRYNNYSNNNQSYNYNN) are 7 X 3 AA repeats of Y-[NS]-N. Positions 146–267 (MAPSSNGRSI…SQAAGYNFIH (122 aa)) constitute a Peptidase C51 domain.

It localises to the secreted. In terms of biological role, not known; immunogenic protein. The sequence is that of Staphylococcal secretory antigen ssaA2 (ssaA2) from Staphylococcus aureus (strain NCTC 8325 / PS 47).